A 318-amino-acid chain; its full sequence is MTVKPELNEITPYLQFNRQEWGNFRKDTPLTLTESDLDKLQGQIEIVSLKEVTEIYLPLSRLLSFYVTARQTLQQATYQFLGKPEPKVPYIIGIAGSVAVGKSTTSRVLKALLSRWPDHPNVEVITTDGFLYSNAKLEKQGLMKRKGFPESYDMPSLLRVLNAIKSGQRNVRIPVYSHHYYDIVRGQYEIVDQPDIVILEGLNILQTGVRKTLQQLQVFVSDFFDFSLFVDAQAQVIQKWYIDRVLSFWRTTFKDPHSYFHYLTQMSETEAAAFAKHVWNEINKVNLMENILPYKNRAQLILEKAADHSIQKVYLRKI.

Residue Gly96 to Ser103 participates in ATP binding.

Belongs to the prokaryotic pantothenate kinase family.

Its subcellular location is the cytoplasm. The catalysed reaction is (R)-pantothenate + ATP = (R)-4'-phosphopantothenate + ADP + H(+). It functions in the pathway cofactor biosynthesis; coenzyme A biosynthesis; CoA from (R)-pantothenate: step 1/5. This is Pantothenate kinase from Coxiella burnetii (strain Dugway 5J108-111).